Consider the following 135-residue polypeptide: Large ribosomal subunit protein uL15 (135 aa).

The disordered stretch occupies residues 21 to 66; it reads VGRGQGSGMGKTATRGGKGQTARTGYKAKRGFEGGQQPLQRRLPKI.

This sequence belongs to the universal ribosomal protein uL15 family. In terms of assembly, part of the 50S ribosomal subunit.

Functionally, binds to the 23S rRNA. In Helicobacter pylori (strain HPAG1), this protein is Large ribosomal subunit protein uL15.